The chain runs to 379 residues: Homoserine O-acetyltransferase (379 aa).

A disordered region spans residues M1 to R24. Residues N60–E365 form the AB hydrolase-1 domain. The Nucleophile role is filled by S165. Residue R236 coordinates substrate. Active-site residues include D329 and H359. D360 is a binding site for substrate.

It belongs to the AB hydrolase superfamily. MetX family. As to quaternary structure, homodimer.

Its subcellular location is the cytoplasm. The enzyme catalyses L-homoserine + acetyl-CoA = O-acetyl-L-homoserine + CoA. It functions in the pathway amino-acid biosynthesis; L-methionine biosynthesis via de novo pathway; O-acetyl-L-homoserine from L-homoserine: step 1/1. In terms of biological role, transfers an acetyl group from acetyl-CoA to L-homoserine, forming acetyl-L-homoserine. The sequence is that of Homoserine O-acetyltransferase from Thermobifida fusca (strain YX).